A 97-amino-acid polypeptide reads, in one-letter code: Homeobox protein HD-9 (97 aa).

A DNA-binding region (homeobox) is located at residues 6–65 (MPAKKSRLSKAQRDFLDTYFEVNPHPNTQERAYIASQSLVSEEKIRNWFQNRRTRERGDC).

It localises to the nucleus. The protein is Homeobox protein HD-9 (HD-9) of Encephalitozoon cuniculi (strain GB-M1) (Microsporidian parasite).